Reading from the N-terminus, the 79-residue chain is EAMZP30-47 protein (79 aa).

A compositionally biased stretch (low complexity) spans 1-12 (HAASPRGRPQQR). The interval 1-47 (HAASPRGRPQQRSSRHGAEGPDTTRRGSCCSSSSSCCRPSTPRHPHN) is disordered. Basic and acidic residues predominate over residues 16–25 (HGAEGPDTTR). Over residues 28-37 (SCCSSSSSCC) the composition is skewed to low complexity.

Its subcellular location is the membrane. It is found in the cell membrane. It localises to the cytoplasmic vesicle. The protein localises to the secretory vesicle. The protein resides in the rhoptry. This is EAMZP30-47 protein (CMC17) from Eimeria acervulina (Coccidian parasite).